Here is a 267-residue protein sequence, read N- to C-terminus: Undecaprenyl-diphosphatase (267 aa).

The next 7 helical transmembrane spans lie at 39–59 (PGLAFDVALHFGTLLALIWYF), 87–107 (VLYLIAATIPGGIGGLLLNDL), 112–132 (FRSPVVIATSLIVMGILLWAV), 145–165 (VTLRDAIIVGCAQVLALVPGV), 183–203 (PSVARFSFLMSMPITLAAVIV), 216–236 (LPLLAGVAAAAVSSWFAISVL), and 244–264 (SFGVFAVYRVLLGIVVFATLA).

This sequence belongs to the UppP family.

The protein localises to the cell inner membrane. It carries out the reaction di-trans,octa-cis-undecaprenyl diphosphate + H2O = di-trans,octa-cis-undecaprenyl phosphate + phosphate + H(+). Functionally, catalyzes the dephosphorylation of undecaprenyl diphosphate (UPP). Confers resistance to bacitracin. This Gemmatimonas aurantiaca (strain DSM 14586 / JCM 11422 / NBRC 100505 / T-27) protein is Undecaprenyl-diphosphatase.